The chain runs to 512 residues: tRNA-2-methylthio-N(6)-dimethylallyladenosine synthase (512 aa).

In terms of domain architecture, MTTase N-terminal spans 17–133 (RTYEVRTFGC…LPTLLERSAH (117 aa)). Residues C26, C62, C96, C170, C174, and C177 each contribute to the [4Fe-4S] cluster site. The 237-residue stretch at 156 to 392 (RESAYAGWVS…LALQERISEE (237 aa)) folds into the Radical SAM core domain. In terms of domain architecture, TRAM spans 395–461 (RKLIGTTQEL…PHFLIADGGV (67 aa)). Positions 473 to 512 (TELGETPTTAPVGVGLGMPSIKKPEPTTAGGCSTGGCGCE) are disordered.

It belongs to the methylthiotransferase family. MiaB subfamily. As to quaternary structure, monomer. [4Fe-4S] cluster serves as cofactor.

Its subcellular location is the cytoplasm. It carries out the reaction N(6)-dimethylallyladenosine(37) in tRNA + (sulfur carrier)-SH + AH2 + 2 S-adenosyl-L-methionine = 2-methylsulfanyl-N(6)-dimethylallyladenosine(37) in tRNA + (sulfur carrier)-H + 5'-deoxyadenosine + L-methionine + A + S-adenosyl-L-homocysteine + 2 H(+). Functionally, catalyzes the methylthiolation of N6-(dimethylallyl)adenosine (i(6)A), leading to the formation of 2-methylthio-N6-(dimethylallyl)adenosine (ms(2)i(6)A) at position 37 in tRNAs that read codons beginning with uridine. The protein is tRNA-2-methylthio-N(6)-dimethylallyladenosine synthase of Corynebacterium jeikeium (strain K411).